We begin with the raw amino-acid sequence, 459 residues long: Glycosyl hydrolase family 109 protein (459 aa).

The tat-type signal signal peptide spans 1-31 (MHNIHRRNFLKAAGAATAGLVTANIALNAYA). NAD(+) is bound by residues 64-65 (ER), Asp86, 135-138 (WEWH), 155-156 (EV), and Asn184. Substrate-binding positions include Tyr213, Arg232, 244–247 (YPTH), and Tyr326. Tyr244 serves as a coordination point for NAD(+).

It belongs to the Gfo/Idh/MocA family. Glycosyl hydrolase 109 subfamily. The cofactor is NAD(+). In terms of processing, predicted to be exported by the Tat system. The position of the signal peptide cleavage has not been experimentally proven.

Functionally, glycosidase. The sequence is that of Glycosyl hydrolase family 109 protein from Shewanella baltica (strain OS155 / ATCC BAA-1091).